Here is a 133-residue protein sequence, read N- to C-terminus: Large ribosomal subunit protein bL17 (133 aa).

It belongs to the bacterial ribosomal protein bL17 family. Part of the 50S ribosomal subunit. Contacts protein L32.

The polypeptide is Large ribosomal subunit protein bL17 (Nitratidesulfovibrio vulgaris (strain ATCC 29579 / DSM 644 / CCUG 34227 / NCIMB 8303 / VKM B-1760 / Hildenborough) (Desulfovibrio vulgaris)).